Consider the following 427-residue polypeptide: Enolase (427 aa).

A (2R)-2-phosphoglycerate-binding site is contributed by glutamine 163. Residue glutamate 205 is the Proton donor of the active site. Aspartate 242, glutamate 283, and aspartate 310 together coordinate Mg(2+). The (2R)-2-phosphoglycerate site is built by lysine 335, arginine 364, serine 365, and lysine 386. Catalysis depends on lysine 335, which acts as the Proton acceptor.

It belongs to the enolase family. Requires Mg(2+) as cofactor.

Its subcellular location is the cytoplasm. The protein resides in the secreted. The protein localises to the cell surface. It catalyses the reaction (2R)-2-phosphoglycerate = phosphoenolpyruvate + H2O. It functions in the pathway carbohydrate degradation; glycolysis; pyruvate from D-glyceraldehyde 3-phosphate: step 4/5. Its function is as follows. Catalyzes the reversible conversion of 2-phosphoglycerate (2-PG) into phosphoenolpyruvate (PEP). It is essential for the degradation of carbohydrates via glycolysis. The sequence is that of Enolase from Salinispora arenicola (strain CNS-205).